Consider the following 37-residue polypeptide: Somatostatin-37 (37 aa).

Positions 1-2 (AL) are excised as a propeptide. Cys26 and Cys37 form a disulfide bridge.

It belongs to the somatostatin family.

It localises to the secreted. In terms of biological role, somatostatin inhibits the release of somatotropin. The sequence is that of Somatostatin-37 (sst) from Petromyzon marinus (Sea lamprey).